The primary structure comprises 149 residues: NPC intracellular cholesterol transporter 2 (149 aa).

The N-terminal stretch at 1 to 19 (MRFLAATILLLALVAASQA) is a signal peptide. 3 disulfides stabilise this stretch: cysteine 27/cysteine 140, cysteine 42/cysteine 47, and cysteine 93/cysteine 99. Residues asparagine 58 and asparagine 69 are each glycosylated (N-linked (GlcNAc...) asparagine). N6-acetyllysine is present on lysine 116.

Belongs to the NPC2 family. In terms of assembly, interacts with NPC1 (via the second lumenal domain) in a cholestrol-dependent manner. Interacts with NUS1/NgBR, the interaction stabilizes NCP2 and regulates cholesterol trafficking. Interacts with DHDDS. Interacts with NEDD4L (via C2 domain). Interacts with NPC1L1. Post-translationally, N-glycosylated. In terms of tissue distribution, detected in liver and bile. Detected in epididymis (at protein level). Detected in caput epididymis, corpus epididymis, cauda epididymis and ovary.

It localises to the secreted. Its subcellular location is the endoplasmic reticulum. It is found in the lysosome. The catalysed reaction is cholesterol(in) = cholesterol(out). Its function is as follows. Intracellular cholesterol transporter which acts in concert with NPC1 and plays an important role in the egress of cholesterol from the lysosomal compartment. Unesterified cholesterol that has been released from LDLs in the lumen of the late endosomes/lysosomes is transferred by NPC2 to the cholesterol-binding pocket in the N-terminal domain of NPC1. May bind and mobilize cholesterol that is associated with membranes. NPC2 binds cholesterol with a 1:1 stoichiometry. Can bind a variety of sterols, including lathosterol, desmosterol and the plant sterols stigmasterol and beta-sitosterol. The secreted form of NCP2 regulates biliary cholesterol secretion via stimulation of ABCG5/ABCG8-mediated cholesterol transport. The sequence is that of NPC intracellular cholesterol transporter 2 from Mus musculus (Mouse).